A 136-amino-acid chain; its full sequence is Large ribosomal subunit protein uL16 (136 aa).

Belongs to the universal ribosomal protein uL16 family. In terms of assembly, part of the 50S ribosomal subunit.

Functionally, binds 23S rRNA and is also seen to make contacts with the A and possibly P site tRNAs. The protein is Large ribosomal subunit protein uL16 of Proteus mirabilis (strain HI4320).